A 673-amino-acid polypeptide reads, in one-letter code: Annexin A6 (673 aa).

N-acetylalanine is present on alanine 2. Position 13 is a phosphoserine (serine 13). 8 Annexin repeats span residues phenylalanine 20–arginine 91, proline 92–glutamine 163, aspartate 175–lysine 247, serine 251–glycine 322, phenylalanine 363–methionine 434, proline 435–threonine 506, glutamate 521–glutamine 595, and asparagine 599–glycine 670. Position 30 is a phosphotyrosine (tyrosine 30). N6-acetyllysine occurs at positions 63, 68, 75, and 81. Tyrosine 201 carries the phosphotyrosine modification. N6-acetyllysine occurs at positions 306, 370, and 418. Serine 422 is subject to Phosphoserine. Lysine 483 bears the N6-acetyllysine mark. Phosphoserine is present on serine 537. Lysine 620 is modified (N6-acetyllysine).

The protein belongs to the annexin family.

The protein resides in the cytoplasm. The protein localises to the melanosome. In terms of biological role, may associate with CD21. May regulate the release of Ca(2+) from intracellular stores. In Mus musculus (Mouse), this protein is Annexin A6 (Anxa6).